Consider the following 460-residue polypeptide: MANDPLEGFHEVNLASPTSPDLLGVCDPGTQEQTTSPSVIYRPHPSTLCSATIQANALNLSDLPTQPVYSSPRHLNCAEISNISIHVPEPASSVASEVAAGLTRFTSRKDSCNAEREFLQGATVTEASAGNDDIFGLSTDSLSRLRSPSVLEVREKGYERLKEELAKAQRELKLKDEECERLSKVRDQLGQELEELTASLFEEAHKMVREANVKQATAEKQLKEAQGKIDVLQAEVAALKTLVLSSSPTSPTQEPLAAGKTPFKRGHTRNKSTSSAMSGSHQDFSAIQPIVKDCREADLSLYNEFRSWKDEPTMDRTCPFLDKIYQEDIFPCLTFAKSELASAVLEAVENNTLSIEPVGLQPIRFVKASAVECGGPKKCALTGQSKPCKHRIKLGDSSSYYYISPVCRYRITSVCNFFTYIRYIQQGLVKQQDVDQMFWEVMQLRKEMSLAKLGYFKEEL.

6 positions are modified to phosphoserine: Ser-147, Ser-149, Ser-247, Ser-250, Ser-272, and Ser-280. The stretch at 149–244 forms a coiled coil; it reads SVLEVREKGY…EVAALKTLVL (96 aa). The disordered stretch occupies residues 246 to 280; that stretch reads SSPTSPTQEPLAAGKTPFKRGHTRNKSTSSAMSGS. Over residues 271–280 the composition is skewed to polar residues; the sequence is KSTSSAMSGS.

It belongs to the SEC2 family. Homodimer. Interacts with the N-terminal region of SSX2. Interacts with the GDP-bound forms of RAB8A and RAB8B. The interaction with RAB8A is prevented by phosphorylation of RAB8A at 'Thr-72'. Interacts with the GDP-bound forms of RAB3A and RAB3D. Interacts with DCDC1. Interacts (via the N-terminal region) with TRAPPC14; this interaction mediates RAB3IP association with the TRAPP II complex. Forms a heterotetramer with RAB11A where RAB3IP homodimer binds two RAB11A subunits. Forms a complex with RAB11A and RAB11FIP3, probably a heterohexamer with two of each protein subunit, where Rabin8/RAB3IP and RAB11FIP3 simultaneously bind to RAB11A; the complex promotes preciliary trafficking. Forms a complex containing RAB11A, ASAP1, RAB3IP, RAP11FIP3 and ARF4; the complex promotes preciliary trafficking; the complex binds to RHO in photoreceptor cells and promotes RHO ciliary transport. As to expression, ubiquitously expressed. Expressed at highest level in testis.

The protein localises to the cytoplasm. The protein resides in the nucleus. It localises to the cytoskeleton. It is found in the cell projection. Its subcellular location is the lamellipodium. In terms of biological role, guanine nucleotide exchange factor (GEF) which may activate RAB8A and RAB8B. Promotes the exchange of GDP to GTP, converting inactive GDP-bound Rab proteins into their active GTP-bound form. Mediates the release of GDP from RAB8A and RAB8B but not from RAB3A or RAB5. Modulates actin organization and promotes polarized transport of RAB8A-specific vesicles to the cell surface. Together with RAB11A, RAB8A, the exocyst complex, PARD3, PRKCI, ANXA2, CDC42 and DNMBP promotes transcytosis of PODXL to the apical membrane initiation sites (AMIS), apical surface formation and lumenogenesis. Together with RAB11A and FIP3/RAB11FIP3, parts of the ciliary targeting complex that promotes preciliary vesicle trafficking to mother centriole and ciliogenesis initiation. Part of the ciliary targeting complex containing Rab11, ASAP1, RAB3IP and RAB11FIP3 and ARF4 that promotes RAB3IP preciliary vesicle trafficking to mother centriole and ciliogenesis initiation. This chain is Rab-3A-interacting protein (Rab3ip), found in Rattus norvegicus (Rat).